Here is a 333-residue protein sequence, read N- to C-terminus: Fructose-1,6-bisphosphatase class 1 (333 aa).

The Mg(2+) site is built by Glu92, Asp113, Leu115, and Asp116. Residues 116 to 119 (DGSS), Asn209, Tyr242, and Lys272 contribute to the substrate site. Position 278 (Glu278) interacts with Mg(2+).

The protein belongs to the FBPase class 1 family. Homotetramer. The cofactor is Mg(2+).

The protein localises to the cytoplasm. It carries out the reaction beta-D-fructose 1,6-bisphosphate + H2O = beta-D-fructose 6-phosphate + phosphate. It functions in the pathway carbohydrate biosynthesis; Calvin cycle. In Chlorobaculum parvum (strain DSM 263 / NCIMB 8327) (Chlorobium vibrioforme subsp. thiosulfatophilum), this protein is Fructose-1,6-bisphosphatase class 1.